A 92-amino-acid chain; its full sequence is Small ribosomal subunit protein uS19 (92 aa).

It belongs to the universal ribosomal protein uS19 family.

In terms of biological role, protein S19 forms a complex with S13 that binds strongly to the 16S ribosomal RNA. The polypeptide is Small ribosomal subunit protein uS19 (Corynebacterium diphtheriae (strain ATCC 700971 / NCTC 13129 / Biotype gravis)).